Here is a 155-residue protein sequence, read N- to C-terminus: Deoxyuridine 5'-triphosphate nucleotidohydrolase (155 aa).

Residues 74 to 76, Asn-87, and 91 to 93 each bind substrate; these read RSG and LID.

Belongs to the dUTPase family. Mg(2+) serves as cofactor.

The enzyme catalyses dUTP + H2O = dUMP + diphosphate + H(+). It functions in the pathway pyrimidine metabolism; dUMP biosynthesis; dUMP from dCTP (dUTP route): step 2/2. Functionally, this enzyme is involved in nucleotide metabolism: it produces dUMP, the immediate precursor of thymidine nucleotides and it decreases the intracellular concentration of dUTP so that uracil cannot be incorporated into DNA. The polypeptide is Deoxyuridine 5'-triphosphate nucleotidohydrolase (Xanthomonas oryzae pv. oryzae (strain MAFF 311018)).